The primary structure comprises 92 residues: Small ribosomal subunit protein bS18B (92 aa).

Belongs to the bacterial ribosomal protein bS18 family. In terms of assembly, part of the 30S ribosomal subunit. Forms a tight heterodimer with protein bS6.

Functionally, binds as a heterodimer with protein bS6 to the central domain of the 16S rRNA, where it helps stabilize the platform of the 30S subunit. This chain is Small ribosomal subunit protein bS18B, found in Cupriavidus pinatubonensis (strain JMP 134 / LMG 1197) (Cupriavidus necator (strain JMP 134)).